The following is a 411-amino-acid chain: Serine hydroxymethyltransferase (411 aa).

(6S)-5,6,7,8-tetrahydrofolate is bound at residue 120–122 (GHL). Lys-225 carries the post-translational modification N6-(pyridoxal phosphate)lysine. Residues Glu-241 and 350 to 352 (SPF) each bind (6S)-5,6,7,8-tetrahydrofolate.

Belongs to the SHMT family. Homodimer. Requires pyridoxal 5'-phosphate as cofactor.

The protein localises to the cytoplasm. It carries out the reaction (6R)-5,10-methylene-5,6,7,8-tetrahydrofolate + glycine + H2O = (6S)-5,6,7,8-tetrahydrofolate + L-serine. It participates in one-carbon metabolism; tetrahydrofolate interconversion. Its pathway is amino-acid biosynthesis; glycine biosynthesis; glycine from L-serine: step 1/1. Its function is as follows. Catalyzes the reversible interconversion of serine and glycine with tetrahydrofolate (THF) serving as the one-carbon carrier. This reaction serves as the major source of one-carbon groups required for the biosynthesis of purines, thymidylate, methionine, and other important biomolecules. Also exhibits THF-independent aldolase activity toward beta-hydroxyamino acids, producing glycine and aldehydes, via a retro-aldol mechanism. This chain is Serine hydroxymethyltransferase, found in Limosilactobacillus fermentum (strain NBRC 3956 / LMG 18251) (Lactobacillus fermentum).